The sequence spans 811 residues: Phenylalanine--tRNA ligase beta subunit (811 aa).

The tRNA-binding domain maps to 40–156 (AEKNENIVVG…EDIEVGSKVD (117 aa)). One can recognise a B5 domain in the interval 411-486 (KSTKEVKVPL…RIHGYDHLPY (76 aa)). Positions 464, 470, 473, and 474 each coordinate Mg(2+). Residues 717–810 (PRYPSVSRDI…VNKKFGSYVR (94 aa)) form the FDX-ACB domain.

The protein belongs to the phenylalanyl-tRNA synthetase beta subunit family. Type 1 subfamily. As to quaternary structure, tetramer of two alpha and two beta subunits. It depends on Mg(2+) as a cofactor.

The protein resides in the cytoplasm. The enzyme catalyses tRNA(Phe) + L-phenylalanine + ATP = L-phenylalanyl-tRNA(Phe) + AMP + diphosphate + H(+). This chain is Phenylalanine--tRNA ligase beta subunit, found in Oceanobacillus iheyensis (strain DSM 14371 / CIP 107618 / JCM 11309 / KCTC 3954 / HTE831).